We begin with the raw amino-acid sequence, 335 residues long: Ketol-acid reductoisomerase (NADP(+)) (335 aa).

The KARI N-terminal Rossmann domain maps to 5-185 (SKIYTDKDSN…GATRAGVIPT (181 aa)). NADP(+)-binding positions include 28 to 31 (YGSQ), S56, and 86 to 89 (DMVQ). Residue H111 is part of the active site. G137 lines the NADP(+) pocket. The KARI C-terminal knotted domain occupies 186–331 (TFKEETETDL…NQLKDLIQKG (146 aa)). Mg(2+) contacts are provided by D194, E198, E230, and E234. Position 255 (S255) interacts with substrate.

The protein belongs to the ketol-acid reductoisomerase family. Mg(2+) serves as cofactor.

The catalysed reaction is (2R)-2,3-dihydroxy-3-methylbutanoate + NADP(+) = (2S)-2-acetolactate + NADPH + H(+). It carries out the reaction (2R,3R)-2,3-dihydroxy-3-methylpentanoate + NADP(+) = (S)-2-ethyl-2-hydroxy-3-oxobutanoate + NADPH + H(+). Its pathway is amino-acid biosynthesis; L-isoleucine biosynthesis; L-isoleucine from 2-oxobutanoate: step 2/4. It functions in the pathway amino-acid biosynthesis; L-valine biosynthesis; L-valine from pyruvate: step 2/4. In terms of biological role, involved in the biosynthesis of branched-chain amino acids (BCAA). Catalyzes an alkyl-migration followed by a ketol-acid reduction of (S)-2-acetolactate (S2AL) to yield (R)-2,3-dihydroxy-isovalerate. In the isomerase reaction, S2AL is rearranged via a Mg-dependent methyl migration to produce 3-hydroxy-3-methyl-2-ketobutyrate (HMKB). In the reductase reaction, this 2-ketoacid undergoes a metal-dependent reduction by NADPH to yield (R)-2,3-dihydroxy-isovalerate. In Saccharolobus islandicus (strain L.S.2.15 / Lassen #1) (Sulfolobus islandicus), this protein is Ketol-acid reductoisomerase (NADP(+)).